The sequence spans 431 residues: Adenylosuccinate synthetase 2 (431 aa).

GTP-binding positions include 13 to 19 (GDEGKGK) and 41 to 43 (GHT). The active-site Proton acceptor is the Asp14. Residues Asp14 and Gly41 each coordinate Mg(2+). Residues 14–17 (DEGK), 39–42 (NAGH), Thr130, Arg144, Gln225, Thr240, and Arg304 contribute to the IMP site. The Proton donor role is filled by His42. 300-306 (SVTGRPR) serves as a coordination point for substrate. Residues Arg306, 332–334 (KLD), and 414–416 (STG) each bind GTP.

It belongs to the adenylosuccinate synthetase family. In terms of assembly, homodimer. Mg(2+) serves as cofactor.

The protein localises to the cytoplasm. It catalyses the reaction IMP + L-aspartate + GTP = N(6)-(1,2-dicarboxyethyl)-AMP + GDP + phosphate + 2 H(+). Its pathway is purine metabolism; AMP biosynthesis via de novo pathway; AMP from IMP: step 1/2. Plays an important role in the de novo pathway of purine nucleotide biosynthesis. Catalyzes the first committed step in the biosynthesis of AMP from IMP. The polypeptide is Adenylosuccinate synthetase 2 (Chromobacterium violaceum (strain ATCC 12472 / DSM 30191 / JCM 1249 / CCUG 213 / NBRC 12614 / NCIMB 9131 / NCTC 9757 / MK)).